Reading from the N-terminus, the 278-residue chain is Envelope glycoprotein L (278 aa).

Residues 1 to 30 form the signal peptide; it reads MCRRPDCGFSFSPGPVILLWCCLLLPIVSS. The gL betaherpesvirus-type domain occupies 43–256; the sequence is VPAECPELTR…DKYYAGLPPE (214 aa). An intrachain disulfide couples cysteine 154 to cysteine 159.

This sequence belongs to the herpesviridae glycoprotein L (gL) family. Betaherpesvirinae gL subfamily. Interacts with glycoprotein H (gH); this interaction is necessary for the correct processing and cell surface expression of gH. Forms the envelope pentamer complex (PC) composed of gH, gL, UL128, UL130, and UL131A. The pentamer interacts with host NRP2. Forms the envelope trimer complex composed of gH, gL, and gO. The trimer interacts with host PDGFRA. The trimer also interacts with host EPHA2.

The protein resides in the virion membrane. Its subcellular location is the host cell membrane. It localises to the host Golgi apparatus. It is found in the host trans-Golgi network. The heterodimer glycoprotein H-glycoprotein L is required for the fusion of viral and plasma membranes leading to virus entry into the host cell. Acts as a functional inhibitor of gH and maintains gH in an inhibited form. Upon binding to host integrins, gL dissociates from gH leading to activation of the viral fusion glycoproteins gB and gH. In human cytomegalovirus, forms two distincts complexes to mediate viral entry, a trimer and a pentamer at the surface of the virion envelope. The gH-gL-gO trimer is required for infection in fibroblasts by interacting with host PDGFRA, and in glioblastoma cells by interacting with host EPHA2. The gH-gL-UL128-UL130-UL131A pentamer is essential for viral entry in epithelial, endothelial and myeloid cells via interaction with host NRP2. The polypeptide is Envelope glycoprotein L (Homo sapiens (Human)).